We begin with the raw amino-acid sequence, 524 residues long: Ankyrin repeat-containing protein At5g02620 (524 aa).

8 ANK repeats span residues 16–45, 55–84, 90–119, 124–153, 158–187, 192–222, 226–255, and 260–289; these read RDDT…GVEL, SGET…SVLA, NGFD…ELSF, SKTT…DLAA, NGKT…GMVT, KGQT…LINS, KGNT…VSRV, and SGET…QNAR. Helical transmembrane passes span 349-369, 399-419, 441-461, and 472-492; these read AINS…AAIF, FLIF…VVVV, LMWM…FVVV, and VTAI…YWVI. Serine 508 carries the post-translational modification Phosphoserine.

It localises to the membrane. This is Ankyrin repeat-containing protein At5g02620 from Arabidopsis thaliana (Mouse-ear cress).